The following is a 544-amino-acid chain: Chaperonin GroEL 1 (544 aa).

ATP is bound by residues Thr-30–Pro-33, Asp-87–Thr-91, Gly-415, Asn-480–Ala-482, and Asp-496.

The protein belongs to the chaperonin (HSP60) family. As to quaternary structure, forms a cylinder of 14 subunits composed of two heptameric rings stacked back-to-back. Interacts with the co-chaperonin GroES.

The protein resides in the cytoplasm. It carries out the reaction ATP + H2O + a folded polypeptide = ADP + phosphate + an unfolded polypeptide.. Together with its co-chaperonin GroES, plays an essential role in assisting protein folding. The GroEL-GroES system forms a nano-cage that allows encapsulation of the non-native substrate proteins and provides a physical environment optimized to promote and accelerate protein folding. In Polaromonas naphthalenivorans (strain CJ2), this protein is Chaperonin GroEL 1.